We begin with the raw amino-acid sequence, 308 residues long: Mycothiol acetyltransferase (308 aa).

N-acetyltransferase domains are found at residues 8 to 155 (RDVD…PRLR) and 160 to 308 (VQVR…RRAR). E39 contributes to the 1D-myo-inositol 2-(L-cysteinylamino)-2-deoxy-alpha-D-glucopyranoside binding site. 84–86 (LVV) provides a ligand contact to acetyl-CoA. Residues E187, K226, and E240 each contribute to the 1D-myo-inositol 2-(L-cysteinylamino)-2-deoxy-alpha-D-glucopyranoside site. Acetyl-CoA is bound by residues 244-246 (LGI) and 251-257 (QGLGLGR). Residue Y278 participates in 1D-myo-inositol 2-(L-cysteinylamino)-2-deoxy-alpha-D-glucopyranoside binding.

Belongs to the acetyltransferase family. MshD subfamily. Monomer.

It carries out the reaction 1D-myo-inositol 2-(L-cysteinylamino)-2-deoxy-alpha-D-glucopyranoside + acetyl-CoA = mycothiol + CoA + H(+). Its function is as follows. Catalyzes the transfer of acetyl from acetyl-CoA to desacetylmycothiol (Cys-GlcN-Ins) to form mycothiol. The sequence is that of Mycothiol acetyltransferase from Geodermatophilus obscurus (strain ATCC 25078 / DSM 43160 / JCM 3152 / CCUG 61914 / KCC A-0152 / KCTC 9177 / NBRC 13315 / NRRL B-3577 / G-20).